The following is a 465-amino-acid chain: Cysteine--tRNA ligase (465 aa).

Cys-29 contributes to the Zn(2+) binding site. The 'HIGH' region motif lies at 31 to 41 (PTVYNYIHIGN). Cys-209, His-234, and Glu-238 together coordinate Zn(2+). The 'KMSKS' region signature appears at 266-270 (KMSKS). Lys-269 serves as a coordination point for ATP. Ser-270 is subject to Phosphoserine.

Belongs to the class-I aminoacyl-tRNA synthetase family. Monomer. It depends on Zn(2+) as a cofactor.

The protein resides in the cytoplasm. It catalyses the reaction tRNA(Cys) + L-cysteine + ATP = L-cysteinyl-tRNA(Cys) + AMP + diphosphate. This is Cysteine--tRNA ligase from Bacillus cereus (strain AH187).